Consider the following 163-residue polypeptide: Single-stranded DNA-binding protein 2 (163 aa).

Residues 1 to 104 (MINNVVLVGR…VVADNFQMLE (104 aa)) enclose the SSB domain. Positions 109–163 (REGGSTGSFNGGFNNNTSSSNSYSAPAQQTPNFGRDDSPFGNSNPMDISDDDLPF) are disordered. The span at 119-130 (GGFNNNTSSSNS) shows a compositional bias: low complexity. Residues 131 to 140 (YSAPAQQTPN) are compositionally biased toward polar residues. The Important for interaction with partner proteins signature appears at 158–163 (DDDLPF).

As to quaternary structure, homotetramer.

In terms of biological role, plays an important role in DNA replication, recombination and repair. Binds to ssDNA and to an array of partner proteins to recruit them to their sites of action during DNA metabolism. The chain is Single-stranded DNA-binding protein 2 (ssb2) from Streptococcus pyogenes serotype M6 (strain ATCC BAA-946 / MGAS10394).